A 437-amino-acid polypeptide reads, in one-letter code: Elongator complex protein 4 (437 aa).

Residues 179-247 (FSKSSSPTTP…TKTGSQDSPL (69 aa)) form a disordered region. The span at 181-192 (KSSSPTTPSLEQ) shows a compositional bias: polar residues. Serine 183 carries the post-translational modification Phosphoserine. Residues 220-237 (SANNNNNNNNNSSSVTSS) show a composition bias toward low complexity. Serine 242 carries the post-translational modification Phosphoserine.

It belongs to the ELP4 family. As to quaternary structure, component of the elongator complex composed of Elp1, Elp2, Elp3, Elp4, Elp5 and Elp6. The elongator complex associates with and stabilizes microtubules; efficient interaction requires the full complex.

Its subcellular location is the cytoplasm. The protein resides in the nucleus. It is found in the cytoskeleton. It localises to the spindle. The protein operates within tRNA modification; 5-methoxycarbonylmethyl-2-thiouridine-tRNA biosynthesis. Component of the elongator complex, which is required for multiple tRNA modifications, including mcm5U (5-methoxycarbonylmethyl uridine), mcm5s2U (5-methoxycarbonylmethyl-2-thiouridine), and ncm5U (5-carbamoylmethyl uridine). The elongator complex catalyzes the formation of carboxymethyluridine in the wobble base at position 34 in tRNAs. Binding by the elongator complex stabilizes microtubules and promotes their growth. This induces central spindle asymmetry, promoting polarized signaling endosome trafficking during asymmetric cell division and cell fate assignation of sensory organ precursor cells. The chain is Elongator complex protein 4 from Drosophila melanogaster (Fruit fly).